The following is a 105-amino-acid chain: Small ribosomal subunit protein uS10 (105 aa).

Belongs to the universal ribosomal protein uS10 family. Part of the 30S ribosomal subunit.

Involved in the binding of tRNA to the ribosomes. The sequence is that of Small ribosomal subunit protein uS10 from Rickettsia prowazekii (strain Madrid E).